We begin with the raw amino-acid sequence, 116 residues long: NADH-ubiquinone oxidoreductase chain 3 (116 aa).

The next 3 helical transmembrane spans lie at 3-23 (LIMT…TVSF), 56-76 (FFLV…LLPL), and 87-107 (GTFF…IYEW).

It belongs to the complex I subunit 3 family.

The protein localises to the mitochondrion membrane. It catalyses the reaction a ubiquinone + NADH + 5 H(+)(in) = a ubiquinol + NAD(+) + 4 H(+)(out). Its function is as follows. Core subunit of the mitochondrial membrane respiratory chain NADH dehydrogenase (Complex I) that is believed to belong to the minimal assembly required for catalysis. Complex I functions in the transfer of electrons from NADH to the respiratory chain. The immediate electron acceptor for the enzyme is believed to be ubiquinone. This Cyprinus carpio (Common carp) protein is NADH-ubiquinone oxidoreductase chain 3 (MT-ND3).